A 391-amino-acid chain; its full sequence is E3 ubiquitin-protein ligase RMND5A (391 aa).

The LisH domain occupies 114-146 (SQQILSEVMVEHFFRQGMLDVAEELCQEAGLSI). Residues 153-210 (PFVELNRILEALKVRVLRPALEWAVSNREMLMAQNSSLEFKLHRLYFISLLMGGTVNQ) enclose the CTLH domain. Residues 336-377 (CPILRQQTTDNNPPMKLVCGHIISRDALNKMFNGSKLKCPYC) form an RING-Gid-type zinc finger.

Identified in the CTLH complex that contains at least RANBP9, MKLN1, MAEA, RMND5A, GID8 and ARMC8.

The protein localises to the nucleus. It is found in the nucleoplasm. The protein resides in the cytoplasm. The enzyme catalyses S-ubiquitinyl-[E2 ubiquitin-conjugating enzyme]-L-cysteine + [acceptor protein]-L-lysine = [E2 ubiquitin-conjugating enzyme]-L-cysteine + N(6)-ubiquitinyl-[acceptor protein]-L-lysine.. E3 ubiquitin-protein ligase component of the CTLH complex. In Xenopus tropicalis (Western clawed frog), this protein is E3 ubiquitin-protein ligase RMND5A (rmnd5a).